Reading from the N-terminus, the 464-residue chain is UDP-N-acetylmuramate--L-alanine ligase (464 aa).

Residue 123–129 participates in ATP binding; the sequence is GTHGKTT.

This sequence belongs to the MurCDEF family.

It localises to the cytoplasm. The catalysed reaction is UDP-N-acetyl-alpha-D-muramate + L-alanine + ATP = UDP-N-acetyl-alpha-D-muramoyl-L-alanine + ADP + phosphate + H(+). Its pathway is cell wall biogenesis; peptidoglycan biosynthesis. In terms of biological role, cell wall formation. The chain is UDP-N-acetylmuramate--L-alanine ligase from Carboxydothermus hydrogenoformans (strain ATCC BAA-161 / DSM 6008 / Z-2901).